A 443-amino-acid polypeptide reads, in one-letter code: Protoheme IX farnesyltransferase, mitochondrial (443 aa).

Positions 68–113 are disordered; that stretch reads LSQRVKPKPEPPASPFLEHTSSGQARADEDELPSFPAPSRPLSRKP. Helical transmembrane passes span 174 to 194, 230 to 250, 252 to 272, 286 to 306, 308 to 328, 363 to 383, and 410 to 430; these read AGFA…TSLG, ISPL…VALL, WGVN…YTCC, VGAV…TGSL, AGAL…FNAL, LIAL…FPVI, and LFFC…TCKQ.

This sequence belongs to the UbiA prenyltransferase family.

The protein localises to the mitochondrion membrane. The catalysed reaction is heme b + (2E,6E)-farnesyl diphosphate + H2O = Fe(II)-heme o + diphosphate. Converts protoheme IX and farnesyl diphosphate to heme O. The chain is Protoheme IX farnesyltransferase, mitochondrial (Cox10) from Mus musculus (Mouse).